A 236-amino-acid polypeptide reads, in one-letter code: Increased recombination centers protein 22-2 (236 aa).

The signal sequence occupies residues M1–G19. At Y20–L161 the chain is on the lumenal side. The chain crosses the membrane as a helical span at residues I162–I182. Residues W183–A236 lie on the Cytoplasmic side of the membrane.

It belongs to the IRC22 family.

It is found in the endoplasmic reticulum membrane. Functionally, is probably involved in a pathway contributing to genomic integrity. The polypeptide is Increased recombination centers protein 22-2 (IRC22-2) (Candida tropicalis (strain ATCC MYA-3404 / T1) (Yeast)).